The sequence spans 108 residues: uncharacterized protein (108 aa).

Helical transmembrane passes span 51–71 (VFAA…FCFL) and 86–106 (PLST…KSLL).

Its subcellular location is the membrane. This is an uncharacterized protein from Saccharomyces cerevisiae (strain ATCC 204508 / S288c) (Baker's yeast).